A 383-amino-acid chain; its full sequence is Erythronate-4-phosphate dehydrogenase (383 aa).

Ser-45 and Thr-66 together coordinate substrate. Residues Asp-146, Thr-174, 205–207 (ASR), and Asp-231 contribute to the NAD(+) site. Arg-207 is an active-site residue. Glu-236 is an active-site residue. Residue His-253 is the Proton donor of the active site. An NAD(+)-binding site is contributed by Gly-256. Position 257 (Tyr-257) interacts with substrate.

The protein belongs to the D-isomer specific 2-hydroxyacid dehydrogenase family. PdxB subfamily. In terms of assembly, homodimer.

Its subcellular location is the cytoplasm. It catalyses the reaction 4-phospho-D-erythronate + NAD(+) = (R)-3-hydroxy-2-oxo-4-phosphooxybutanoate + NADH + H(+). Its pathway is cofactor biosynthesis; pyridoxine 5'-phosphate biosynthesis; pyridoxine 5'-phosphate from D-erythrose 4-phosphate: step 2/5. Functionally, catalyzes the oxidation of erythronate-4-phosphate to 3-hydroxy-2-oxo-4-phosphonooxybutanoate. The sequence is that of Erythronate-4-phosphate dehydrogenase from Pseudomonas entomophila (strain L48).